Here is a 242-residue protein sequence, read N- to C-terminus: Uridylate kinase (242 aa).

An ATP-binding site is contributed by 12–15; that stretch reads KLSG. An involved in allosteric activation by GTP region spans residues 20–25; sequence GQKGYG. Glycine 54 serves as a coordination point for UMP. Positions 55 and 59 each coordinate ATP. Residues aspartate 74 and 135 to 142 contribute to the UMP site; that span reads TGNPYFST. Residues glutamine 163, tyrosine 168, and aspartate 171 each contribute to the ATP site.

This sequence belongs to the UMP kinase family. Homohexamer.

Its subcellular location is the cytoplasm. The catalysed reaction is UMP + ATP = UDP + ADP. The protein operates within pyrimidine metabolism; CTP biosynthesis via de novo pathway; UDP from UMP (UMPK route): step 1/1. With respect to regulation, allosterically activated by GTP. Inhibited by UTP. Its function is as follows. Catalyzes the reversible phosphorylation of UMP to UDP. The polypeptide is Uridylate kinase (Desulforamulus reducens (strain ATCC BAA-1160 / DSM 100696 / MI-1) (Desulfotomaculum reducens)).